The primary structure comprises 689 residues: Small ribosomal subunit protein mS39 (689 aa).

Residues 1–37 (MAGVSAVRWLGLRSRLGQPLTGRRAGLCKQARSCRFY) constitute a mitochondrion transit peptide. Lysine 126 carries the post-translational modification N6-acetyllysine. PPR repeat units follow at residues 149 to 183 (IKDI…GTTV), 184 to 219 (SLET…EALE), 255 to 289 (NAHS…RLHA), 290 to 330 (DVYT…KVKP), 331 to 367 (NLQT…GIEP), 368 to 404 (SLAT…MGKR), 412 to 446 (DDKF…DNWK), 454 to 488 (RNFY…VYFP), 489 to 523 (HSQT…GHTF), and 572 to 606 (PATS…NKIP). Residues 665-689 (NLTALTSDSDTDSSSDSDSDTSEGK) form a disordered region. Over residues 673–689 (SDTDSSSDSDSDTSEGK) the composition is skewed to acidic residues.

Belongs to the mitochondrion-specific ribosomal protein mS39 family. Component of the mitochondrial ribosome small subunit (28S) which comprises a 12S rRNA and about 30 distinct proteins. Associated with the 12S mitochondrial rRNA (12S mt-rRNA).

It localises to the mitochondrion. Mitochondrial RNA-binding protein that has a role in mitochondrial translation. The protein is Small ribosomal subunit protein mS39 (PTCD3) of Pongo abelii (Sumatran orangutan).